Reading from the N-terminus, the 730-residue chain is Regulatory factor X 4 (730 aa).

The segment covering 30–41 (YSSHTSLGNISN) has biased composition (polar residues). The disordered stretch occupies residues 30–59 (YSSHTSLGNISNDETDEEKENRASKPHSTP). Residues 61–136 (TLQWLGENYE…YHYYGIAVKE (76 aa)) constitute a DNA-binding region (RFX-type winged-helix). Residues 500–532 (EPAISTPSPVPFSPAASSSSVEIPSATSPVSNQ) are disordered. The segment covering 512–528 (SPAASSSSVEIPSATSP) has biased composition (low complexity).

The protein belongs to the RFX family.

It localises to the nucleus. In terms of biological role, required for neural tube ciliogenesis during embryogenesis. In Xenopus laevis (African clawed frog), this protein is Regulatory factor X 4.